Consider the following 313-residue polypeptide: Short-chain dehydrogenase/reductase family 9C member 7 (313 aa).

An NADP(+)-binding site is contributed by 29–53; the sequence is FITGCDSGFGNLLAKQLVDRGMQVL. Ser160 provides a ligand contact to substrate. The Proton acceptor role is filled by Tyr172. Ser185 is subject to Phosphoserine.

The protein belongs to the short-chain dehydrogenases/reductases (SDR) family. In terms of tissue distribution, expressed in the skin. Expressed in granular and cornified layers of the epidermis (at protein level). Highly expressed in liver.

It localises to the cytoplasm. The enzyme catalyses a N-[omega-(9R,10R)-epoxy-(13R)-hydroxy-(11E)-octadecenoyloxy]acyl-beta-D-glucosyl-(1&lt;-&gt;1)-sphing-4E-enine + NAD(+) = a N-[omega-(9R,10R)-epoxy-13-oxo-(11E)-octadecenoyloxy]acyl-beta-D-glucosyl-(1&lt;-&gt;1)-sphing-4E-enine + NADH + H(+). It catalyses the reaction a N-[omega-(9R,10R)-epoxy-(13R)-hydroxy-(11E)-octadecenoyloxy]-acylsphing-4E-enine + NAD(+) = a N-[omega-(9R,10R)-epoxy-13-oxo-(11E)-octadecenoyloxy]-acylsphing-4E-enine + NADH + H(+). In terms of biological role, plays a crucial role in the formation of the epidermal permeability barrier. Catalyzes the NAD+-dependent dehydrogenation of the linoleate 9,10-trans-epoxy-11E-13-alcohol esterified in omega-O-acylceramides (such as in N-[omega-(9R,10R)-epoxy-(13R)-hydroxy-(11E)-octadecenoyloxy]-acylsphing-4E-enine) to the corresponding 13-ketone, the reactive moiety required for binding of epidermal ceramides to proteins. Displays weak conversion of all-trans-retinal to all-trans-retinol in the presence of NADH. Has apparently no steroid dehydrogenase activity. This chain is Short-chain dehydrogenase/reductase family 9C member 7 (SDR9C7), found in Homo sapiens (Human).